We begin with the raw amino-acid sequence, 506 residues long: Probable cytosol aminopeptidase (506 aa).

K270 and D275 together coordinate Mn(2+). K282 is an active-site residue. Mn(2+) contacts are provided by D293, D352, and E354. Residue R356 is part of the active site.

It belongs to the peptidase M17 family. Mn(2+) serves as cofactor.

The protein resides in the cytoplasm. The enzyme catalyses Release of an N-terminal amino acid, Xaa-|-Yaa-, in which Xaa is preferably Leu, but may be other amino acids including Pro although not Arg or Lys, and Yaa may be Pro. Amino acid amides and methyl esters are also readily hydrolyzed, but rates on arylamides are exceedingly low.. It catalyses the reaction Release of an N-terminal amino acid, preferentially leucine, but not glutamic or aspartic acids.. In terms of biological role, presumably involved in the processing and regular turnover of intracellular proteins. Catalyzes the removal of unsubstituted N-terminal amino acids from various peptides. The chain is Probable cytosol aminopeptidase from Photorhabdus laumondii subsp. laumondii (strain DSM 15139 / CIP 105565 / TT01) (Photorhabdus luminescens subsp. laumondii).